A 486-amino-acid chain; its full sequence is Malonate-semialdehyde dehydrogenase (486 aa).

5 residues coordinate NAD(+): phenylalanine 154, lysine 178, glutamate 181, arginine 182, and serine 231. The active-site Nucleophile is the cysteine 286. Glutamate 386 contacts NAD(+).

This sequence belongs to the aldehyde dehydrogenase family. IolA subfamily. Homotetramer.

The catalysed reaction is 3-oxopropanoate + NAD(+) + CoA + H2O = hydrogencarbonate + acetyl-CoA + NADH + H(+). The enzyme catalyses 2-methyl-3-oxopropanoate + NAD(+) + CoA + H2O = propanoyl-CoA + hydrogencarbonate + NADH + H(+). It participates in polyol metabolism; myo-inositol degradation into acetyl-CoA; acetyl-CoA from myo-inositol: step 7/7. In terms of biological role, catalyzes the oxidation of malonate semialdehyde (MSA) and methylmalonate semialdehyde (MMSA) into acetyl-CoA and propanoyl-CoA, respectively. Is involved in a myo-inositol catabolic pathway. Bicarbonate, and not CO2, is the end-product of the enzymatic reaction. The sequence is that of Malonate-semialdehyde dehydrogenase from Bacillus cereus (strain B4264).